The following is a 218-amino-acid chain: Putative NAD(P)H nitroreductase SH0546 (218 aa).

Belongs to the nitroreductase family. FMN is required as a cofactor.

The chain is Putative NAD(P)H nitroreductase SH0546 from Staphylococcus haemolyticus (strain JCSC1435).